The primary structure comprises 316 residues: MDKENFTRLRGELFCDHPLARYTSWRVGGKAERFYRPADLFDLQDFLTQLPSDEPLTWLGLGSNVLIRDGGIKGTVILTLNRLKELSVVNSQLVFREKSGTEDFFSGNGKTIIRAEAGVTCAKLAKFCVSQGLEDGAFFAGIPGTVGGALAMNAGAFGGETWRTVIGVETMNHQGEILKRTPDEFKIHYRQVEGLENQFFIAGYFCFNHGDPDKAKTAINALLKKRNLSQPIGKYSCGSVFRNPPGDYAARLIESAGLKGKSIGNAEVSEKHANFILNKGNASAADIEALIHYVAQHVSQIHGIQLVKEVHIIGRS.

Residues 27 to 225 enclose the FAD-binding PCMH-type domain; that stretch reads VGGKAERFYR…KTAINALLKK (199 aa). Arg190 is an active-site residue. The active-site Proton donor is Ser239. Glu309 is a catalytic residue.

This sequence belongs to the MurB family. Requires FAD as cofactor.

The protein localises to the cytoplasm. The enzyme catalyses UDP-N-acetyl-alpha-D-muramate + NADP(+) = UDP-N-acetyl-3-O-(1-carboxyvinyl)-alpha-D-glucosamine + NADPH + H(+). It functions in the pathway cell wall biogenesis; peptidoglycan biosynthesis. In terms of biological role, cell wall formation. The chain is UDP-N-acetylenolpyruvoylglucosamine reductase from Coxiella burnetii (strain RSA 331 / Henzerling II).